Here is an 82-residue protein sequence, read N- to C-terminus: Small ribosomal subunit protein bS16 (82 aa).

The protein belongs to the bacterial ribosomal protein bS16 family.

This Salmonella agona (strain SL483) protein is Small ribosomal subunit protein bS16.